Reading from the N-terminus, the 37-residue chain is Small ribosomal subunit protein eS32 (37 aa).

Belongs to the eukaryotic ribosomal protein eS32 family. As to quaternary structure, part of the small ribosomal subunit.

Functionally, interacts with N(4)-acetylcytidine (ac(4)C) 1459 of the small rRNA; the acetyl group of ac(4)C1459 briges the interaction with this protein. The polypeptide is Small ribosomal subunit protein eS32 (rpl41e) (Thermococcus kodakarensis (strain ATCC BAA-918 / JCM 12380 / KOD1) (Pyrococcus kodakaraensis (strain KOD1))).